The primary structure comprises 221 residues: Endo-1,4-beta-xylanase 2 (221 aa).

Positions 1–19 (MVAFTSLLAGFAAIAGVLS) are cleaved as a signal peptide. The region spanning 32-221 (QTIGPGTGYS…SSGSASITVS (190 aa)) is the GH11 domain. Residues asparagine 69 and asparagine 92 are each glycosylated (N-linked (GlcNAc...) asparagine). The active-site Nucleophile is the glutamate 117. Glutamate 208 acts as the Proton donor in catalysis.

The protein belongs to the glycosyl hydrolase 11 (cellulase G) family.

The protein localises to the secreted. It carries out the reaction Endohydrolysis of (1-&gt;4)-beta-D-xylosidic linkages in xylans.. The protein operates within glycan degradation; xylan degradation. Endo-1,4-beta-xylanase involved in the hydrolysis of xylan, a major structural heterogeneous polysaccharide found in plant biomass representing the second most abundant polysaccharide in the biosphere, after cellulose. The polypeptide is Endo-1,4-beta-xylanase 2 (Xyn2) (Trichoderma harzianum (Hypocrea lixii)).